Consider the following 563-residue polypeptide: Probable trehalase (563 aa).

Residues arginine 154, 161–162 (WD), asparagine 198, 207–209 (RSQ), 274–276 (RPE), and glycine 307 contribute to the substrate site. Active-site proton donor/acceptor residues include aspartate 309 and glutamate 517. Residue glutamate 532 participates in substrate binding.

Belongs to the glycosyl hydrolase 37 family.

It carries out the reaction alpha,alpha-trehalose + H2O = alpha-D-glucose + beta-D-glucose. Functionally, involved in the regulation of trehalose content by hydrolyzing trehalose to glucose. In Oryza sativa subsp. japonica (Rice), this protein is Probable trehalase.